A 357-amino-acid chain; its full sequence is Holliday junction branch migration complex subunit RuvB (357 aa).

The tract at residues 3–193 (WDDTTDAEAA…FGFTAHMEFY (191 aa)) is large ATPase domain (RuvB-L). Residues L32, R33, G74, K77, T78, T79, 140-142 (EDF), R183, Y193, and R230 contribute to the ATP site. T78 lines the Mg(2+) pocket. The segment at 194 to 264 (GPAELERVIH…IAAAALAVYE (71 aa)) is small ATPAse domain (RuvB-S). The segment at 267–357 (ARGLDRLDRG…GNGQPDLFGA (91 aa)) is head domain (RuvB-H). 3 residues coordinate DNA: R303, R322, and R327. The tract at residues 337-357 (LGLTPPRPQSSGNGQPDLFGA) is disordered.

Belongs to the RuvB family. In terms of assembly, homohexamer. Forms an RuvA(8)-RuvB(12)-Holliday junction (HJ) complex. HJ DNA is sandwiched between 2 RuvA tetramers; dsDNA enters through RuvA and exits via RuvB. An RuvB hexamer assembles on each DNA strand where it exits the tetramer. Each RuvB hexamer is contacted by two RuvA subunits (via domain III) on 2 adjacent RuvB subunits; this complex drives branch migration. In the full resolvosome a probable DNA-RuvA(4)-RuvB(12)-RuvC(2) complex forms which resolves the HJ.

The protein localises to the cytoplasm. It catalyses the reaction ATP + H2O = ADP + phosphate + H(+). Functionally, the RuvA-RuvB-RuvC complex processes Holliday junction (HJ) DNA during genetic recombination and DNA repair, while the RuvA-RuvB complex plays an important role in the rescue of blocked DNA replication forks via replication fork reversal (RFR). RuvA specifically binds to HJ cruciform DNA, conferring on it an open structure. The RuvB hexamer acts as an ATP-dependent pump, pulling dsDNA into and through the RuvAB complex. RuvB forms 2 homohexamers on either side of HJ DNA bound by 1 or 2 RuvA tetramers; 4 subunits per hexamer contact DNA at a time. Coordinated motions by a converter formed by DNA-disengaged RuvB subunits stimulates ATP hydrolysis and nucleotide exchange. Immobilization of the converter enables RuvB to convert the ATP-contained energy into a lever motion, pulling 2 nucleotides of DNA out of the RuvA tetramer per ATP hydrolyzed, thus driving DNA branch migration. The RuvB motors rotate together with the DNA substrate, which together with the progressing nucleotide cycle form the mechanistic basis for DNA recombination by continuous HJ branch migration. Branch migration allows RuvC to scan DNA until it finds its consensus sequence, where it cleaves and resolves cruciform DNA. The sequence is that of Holliday junction branch migration complex subunit RuvB from Streptomyces coelicolor (strain ATCC BAA-471 / A3(2) / M145).